The following is a 166-amino-acid chain: Spiderine-1a (166 aa).

The N-terminal stretch at 1 to 18 is a signal peptide; sequence MKFALVLLGVCAFYLVNA. Residues 19-58 constitute a propeptide that is removed on maturation; it reads TGDLETELEASELQELQEALDLIGETPLESLEAEELEEAR. Residues 59–99 are linear cationic cytotoxin domain; the sequence is KFKWGKLFSTAKKLYKKGKKLSKNKNFKKALKFGKQLAKNL. The Oxytoxin-type inhibitor cystine knot (ICK) domain occupies 113–166; sequence NNKCWAIGTTCSDDCDCCPEHHCHCPAGKWLPGLFRCTCQVTESDKVNKCPPAE. Intrachain disulfides connect Cys-116–Cys-130, Cys-123–Cys-135, Cys-127–Cys-162, Cys-129–Cys-151, and Cys-137–Cys-149.

Belongs to the spiderine family. Cationic/spiderine subfamily. As to expression, expressed by the venom gland.

The protein resides in the secreted. Its function is as follows. Has antimicrobial, insecticidal, cytolytic and cytotoxic activity. Active against E.coli DH5alpha, E.faecalis VKM B 871, B.subtilis VKM B 501, A.globiformis VKM Ac 1112, P.aeruginosa PAO1 and S.aureus 209P in submicromolar or low micromolar ranges. Lyses human erythrocytes. Kills HeLA and A549 cells. The protein is Spiderine-1a of Oxyopes takobius (Lynx spider).